A 387-amino-acid chain; its full sequence is 26S proteasome regulatory subunit 6B homolog (387 aa).

An ATP-binding site is contributed by 175–182 (GPPGTGKT).

It belongs to the AAA ATPase family. The 26S proteasome consists of a 20S proteasome core and two 19S regulatory subunits. The 20S proteasome core is composed of 28 subunits that are arranged in four stacked rings, resulting in a barrel-shaped structure. The two end rings are each formed by seven alpha subunits, and the two central rings are each formed by seven beta subunits. The catalytic chamber with the active sites is on the inside of the barrel.

It is found in the cytoplasm. The protein localises to the nucleus. Functionally, acts as a regulatory subunit of the 26S proteasome which degrades poly-ubiquitinated proteins in the cytoplasm and in the nucleus. It is essential for the regulated turnover of proteins and for the removal of misfolded proteins. The proteasome is a multicatalytic proteinase complex that is characterized by its ability to cleave peptides with Arg, Phe, Tyr, Leu, and Glu adjacent to the leaving group at neutral or slightly basic pH. This Encephalitozoon cuniculi (strain GB-M1) (Microsporidian parasite) protein is 26S proteasome regulatory subunit 6B homolog.